Here is a 228-residue protein sequence, read N- to C-terminus: 2-C-methyl-D-erythritol 4-phosphate cytidylyltransferase (228 aa).

Belongs to the IspD/TarI cytidylyltransferase family. IspD subfamily.

The catalysed reaction is 2-C-methyl-D-erythritol 4-phosphate + CTP + H(+) = 4-CDP-2-C-methyl-D-erythritol + diphosphate. It participates in isoprenoid biosynthesis; isopentenyl diphosphate biosynthesis via DXP pathway; isopentenyl diphosphate from 1-deoxy-D-xylulose 5-phosphate: step 2/6. Catalyzes the formation of 4-diphosphocytidyl-2-C-methyl-D-erythritol from CTP and 2-C-methyl-D-erythritol 4-phosphate (MEP). The polypeptide is 2-C-methyl-D-erythritol 4-phosphate cytidylyltransferase (Actinobacillus pleuropneumoniae serotype 5b (strain L20)).